Reading from the N-terminus, the 113-residue chain is U-scoloptoxin(16)-Sa1a (113 aa).

A signal peptide spans Met1 to Ala29.

This sequence belongs to the scoloptoxin-16 family. Contains 4 disulfide bonds. In terms of tissue distribution, expressed by the venom gland.

The protein localises to the secreted. The sequence is that of U-scoloptoxin(16)-Sa1a from Scolopendra alternans (Florida Keys giant centipede).